A 345-amino-acid chain; its full sequence is tRNA dimethylallyltransferase (345 aa).

Residue 9 to 16 participates in ATP binding; that stretch reads GPTASGKS. 11-16 serves as a coordination point for substrate; the sequence is TASGKS. Interaction with substrate tRNA regions lie at residues 34–37 and 195–199; these read DSMQ and QRMIR.

It belongs to the IPP transferase family. As to quaternary structure, monomer. The cofactor is Mg(2+).

The enzyme catalyses adenosine(37) in tRNA + dimethylallyl diphosphate = N(6)-dimethylallyladenosine(37) in tRNA + diphosphate. In terms of biological role, catalyzes the transfer of a dimethylallyl group onto the adenine at position 37 in tRNAs that read codons beginning with uridine, leading to the formation of N6-(dimethylallyl)adenosine (i(6)A). This Orientia tsutsugamushi (strain Boryong) (Rickettsia tsutsugamushi) protein is tRNA dimethylallyltransferase.